The sequence spans 519 residues: Dideacetyl fusicoccin A C-19 hydroxylase (519 aa).

Residues 16 to 36 traverse the membrane as a helical segment; that stretch reads LPVAPILFTALAATIGAFLLS. 4 N-linked (GlcNAc...) asparagine glycosylation sites follow: Asn-177, Asn-327, Asn-414, and Asn-432. A heme-binding site is contributed by Cys-454.

Belongs to the cytochrome P450 family. The cofactor is heme.

Its subcellular location is the membrane. It participates in mycotoxin biosynthesis. Its function is as follows. Cytochrome P450 monooxygenase; part of the 2 gene clusters that mediate the biosynthesis of fusicoccins, diterpene glucosides that display phytohormone-like activity and function as potent activators of plasma membrane H(+)-ATPases in plants by modifying 14-3-3 proteins and cause the plant disease constriction canker. The first step in the pathway is performed by the fusicoccadiene synthase PaFS that possesses both prenyl transferase and terpene cyclase activity, converting isopentenyl diphosphate and dimethylallyl diphosphate into geranylgeranyl diphosphate (GGDP) and successively converting GGDP into fusicocca-2,10(14)-diene, a precursor for fusicoccin H. The second step is the oxidation at the C-8 position by the cytochrome P450 monooxygenase PaP450-2 to yield fusicocca-2,10(14)-diene-8-beta-ol. The cytochrome P450 monooxygenase PaP450-1 then catalyzes the hydroxylation at the C-16 position to produce fusicocca-2,10(14)-diene-8-beta,16-diol. The dioxygenase fc-dox then catalyzes the 16-oxydation of fusicocca-2,10(14)-diene-8-beta,16-diol to yield an aldehyde (8-beta-hydroxyfusicocca-1,10(14)-dien-16-al). The short-chain dehydrogenase/reductase fc-sdr catalyzes the reduction of the aldehyde to yield fusicocca-1,10(14)-diene-8-beta,16-diol. The next step is the hydroxylation at C-9 performed by the cytochrome P450 monooxygenase PaP450-3 that leads to fusicoccin H aglycon which is glycosylated to fusicoccin H by the O-glycosyltransferase PaGT. Hydroxylation at C-12 by the cytochrome P450 monooxygenase PaP450-4 leads then to the production of fusicoccin Q and is followed by methylation by the O-methyltransferase PaMT to yield fusicoccin P. Fusicoccin P is further converted to fusicoccin J via prenylation by the O-glucose prenyltransferase PaPT. Cytochrome P450 monooxygenase PaP450-5 then performs hydroxylation at C-19 to yield dideacetyl-fusicoccin A which is acetylated to 3'-O-deacetyl-fusicoccin A by the O-acetyltransferase PaAT-2. Finally, a another acetylation by the O-acetyltransferase PaAT-1 yields fusicoccin A. In Phomopsis amygdali (Fusicoccum amygdali), this protein is Dideacetyl fusicoccin A C-19 hydroxylase.